A 2885-amino-acid polypeptide reads, in one-letter code: E3 ubiquitin-protein ligase hyd (2885 aa).

Residues 83 to 138 (SDAKCSTSGGSGTASASKAPSSSRPMARSRARLLRATGRSNSTGQGSGSRSTGVII) are disordered. 2 stretches are compositionally biased toward low complexity: residues 95 to 108 (TASA…SRPM) and 116 to 138 (LRAT…GVII). A UBA domain is found at 154–196 (YVPEELISQAEVVLQGKSRNLIIRELQRTNLDVNLAVNNLLSR). Positions 266-276 (ANANAADSNQS) are enriched in low complexity. Disordered regions lie at residues 266 to 291 (ANAN…TGNS), 580 to 664 (NNLN…GRKD), and 711 to 731 (AATS…KEDD). Polar residues-rich tracts occupy residues 277–291 (TTRS…TGNS) and 598–615 (AMPS…SNSK). A phosphoserine mark is found at serine 628 and serine 631. Residues 650–664 (TTKEDSNAPQEGRKD) are compositionally biased toward basic and acidic residues. Residues 711-722 (AATSSTSNTAST) show a composition bias toward low complexity. Phosphoserine is present on serine 967. Over residues 1008 to 1032 (ASSSNENSSFATMSSSAAGSASSTS) the composition is skewed to low complexity. The tract at residues 1008 to 1035 (ASSSNENSSFATMSSSAAGSASSTSRDN) is disordered. The segment at 1217–1285 (DTCSFTWTGA…EKCKCKALIA (69 aa)) adopts a UBR-type zinc-finger fold. Serine 1362 is subject to Phosphoserine. Residues 1642–1761 (NEDGMQDDES…IRSRDTARSS (120 aa)) are disordered. The segment covering 1669–1681 (NQSNQEVQRSVQA) has biased composition (polar residues). Residues 1696 to 1721 (LEDESGDSSAQEEDGSEDGESDDQSD) are compositionally biased toward acidic residues. Polar residues predominate over residues 1735-1749 (TNSNARSDLAPQTMQ). The residue at position 2037 (serine 2037) is a Phosphoserine. The segment at 2124–2143 (IDSSKTGDGNVTNKAEGSTD) is disordered. Serine 2183 carries the post-translational modification Phosphoserine. A disordered region spans residues 2473–2492 (NLDARPYTPPNSSDNATPES). Over residues 2482–2492 (PNSSDNATPES) the composition is skewed to polar residues. In terms of domain architecture, PABC spans 2484-2561 (SSDNATPESL…AIEIITFKQK (78 aa)). Phosphoserine is present on serine 2574. Residues 2782–2885 (FNDESSEGPD…AIKSKNFGFV (104 aa)) form the HECT domain. The active-site Glycyl thioester intermediate is cysteine 2854.

Belongs to the UBR5 family.

It is found in the nucleus. It localises to the cytoplasm. It carries out the reaction S-ubiquitinyl-[E2 ubiquitin-conjugating enzyme]-L-cysteine + [acceptor protein]-L-lysine = [E2 ubiquitin-conjugating enzyme]-L-cysteine + N(6)-ubiquitinyl-[acceptor protein]-L-lysine.. Its pathway is protein modification; protein ubiquitination. In terms of biological role, E3 ubiquitin-protein ligase which accepts ubiquitin from an E2 ubiquitin-conjugating enzyme in the form of a thioester and then directly transfers the ubiquitin to targeted substrate. Required for regulation of cell proliferation in imaginal disks and germ cells. Acts as a negative regulator of hh, ci and dpp expression in the anterior of the eye disk. Acts as a positive regulator of the canonical Wnt signaling pathway by mediating ubiquitination and degradation of gro. Catalyzes 'Lys-63'-linked polyubiquitination of akirin, thereby activating the immune deficiency pathway (Imd). In Drosophila melanogaster (Fruit fly), this protein is E3 ubiquitin-protein ligase hyd (hyd).